The sequence spans 150 residues: Large ribosomal subunit protein bL9 (150 aa).

It belongs to the bacterial ribosomal protein bL9 family.

Binds to the 23S rRNA. This Vibrio atlanticus (strain LGP32) (Vibrio splendidus (strain Mel32)) protein is Large ribosomal subunit protein bL9.